Here is a 146-residue protein sequence, read N- to C-terminus: Hemoglobin subunit beta-2 (146 aa).

Residues Glu-2 to His-146 enclose the Globin domain. 2 residues coordinate heme b: His-63 and His-92.

This sequence belongs to the globin family. As to quaternary structure, hb2 is a heterotetramer of two alpha chains and two beta-2 chains. In terms of tissue distribution, red blood cells.

Involved in oxygen transport from gills to the various peripheral tissues. The protein is Hemoglobin subunit beta-2 (hbb2) of Pseudaphritis urvillii (Congolli).